Consider the following 868-residue polypeptide: Translation initiation factor IF-2 (868 aa).

Composition is skewed to basic and acidic residues over residues 156-166 and 199-209; these read ETVKEEEKINS and SKKEEVKPEKV. Disordered stretches follow at residues 156-177 and 199-269; these read ETVKEEEKINSEENTAESQDEL and SKKE…KYRE. Over residues 249–260 the composition is skewed to basic residues; sequence RGGRSKFKKKKG. The 170-residue stretch at 368-537 folds into the tr-type G domain; that stretch reads GRAPVVTIMG…LLQSEVLELK (170 aa). Residues 377 to 384 form a G1 region; it reads GHVDHGKT. Residue 377–384 participates in GTP binding; that stretch reads GHVDHGKT. Residues 402–406 form a G2 region; the sequence is GITQH. Residues 423 to 426 are G3; sequence DTPG. Residues 423–427 and 477–480 each bind GTP; these read DTPGH and NKMD. The segment at 477 to 480 is G4; it reads NKMD. The interval 513-515 is G5; that stretch reads SAK.

This sequence belongs to the TRAFAC class translation factor GTPase superfamily. Classic translation factor GTPase family. IF-2 subfamily.

It is found in the cytoplasm. Functionally, one of the essential components for the initiation of protein synthesis. Protects formylmethionyl-tRNA from spontaneous hydrolysis and promotes its binding to the 30S ribosomal subunits. Also involved in the hydrolysis of GTP during the formation of the 70S ribosomal complex. The sequence is that of Translation initiation factor IF-2 from Legionella pneumophila subsp. pneumophila (strain Philadelphia 1 / ATCC 33152 / DSM 7513).